A 128-amino-acid polypeptide reads, in one-letter code: Cytochrome c-type biogenesis protein CcmE (128 aa).

At 1–8 the chain is on the cytoplasmic side; the sequence is MQKRVRNR. Residues 9–29 traverse the membrane as a helical; Signal-anchor for type II membrane protein segment; that stretch reads LITIIICFCSAALGISIVLYN. The Periplasmic portion of the chain corresponds to 30–128; it reads LEKNIVFFLP…KHDENYRPPS (99 aa). Positions 120 and 124 each coordinate heme.

This sequence belongs to the CcmE/CycJ family.

The protein resides in the cell inner membrane. Functionally, heme chaperone required for the biogenesis of c-type cytochromes. Transiently binds heme delivered by CcmC and transfers the heme to apo-cytochromes in a process facilitated by CcmF and CcmH. This chain is Cytochrome c-type biogenesis protein CcmE, found in Rickettsia felis (strain ATCC VR-1525 / URRWXCal2) (Rickettsia azadi).